Here is a 296-residue protein sequence, read N- to C-terminus: D-alanine--D-alanine ligase (296 aa).

The 191-residue stretch at 103–293 folds into the ATP-grasp domain; the sequence is KEILMHYRMP…FDSFVKRIIE (191 aa). 129–180 is a binding site for ATP; it reads ISFPVAVKPSSGGSSIATFKVKSIQELKHAYEEASKYGEVMIEQWVTGKEIT. Mg(2+) contacts are provided by Asp-247, Glu-260, and Asn-262.

This sequence belongs to the D-alanine--D-alanine ligase family. Requires Mg(2+) as cofactor. The cofactor is Mn(2+).

The protein localises to the cytoplasm. It carries out the reaction 2 D-alanine + ATP = D-alanyl-D-alanine + ADP + phosphate + H(+). It functions in the pathway cell wall biogenesis; peptidoglycan biosynthesis. Functionally, cell wall formation. In Francisella tularensis subsp. tularensis (strain WY96-3418), this protein is D-alanine--D-alanine ligase.